Reading from the N-terminus, the 483-residue chain is MTLRLYDSLTRAKQPLQPLHPGLVTMYCCGITVYDYCHLGHARTCITWDLVRRYLQWSGYEVRYVQNFTDIDDKILKRAVDESSTMEAVSEKFIAAYFEDMEALGVQPADLYPRATHTLDGIKRLIAELEAKGYAYPSGGDVYYSVRNFDGYGKLSGRRLEDLQAGASGRVTVADPDGAQKQDPFDFALWKSAKPGEPAWESPWGKGRPGWHIECSAMVREFLGETIDLHVGGNDLIFPHHENEIAQSEAVTGQPLAQYWLHNGMVKVDGEKMSKSLGNFTTIRALLKTVDPMAIRLLVLQGHYRKPLDFTETAIAAATNGWHTLREGLQFGYDYGGDFGWELAFTPLGPDANQWTVAFQEAVDDDFNFAGGLAVMFELAKHLRSEGNKLKFEGSTPADLDLLQTQWITLVSLAEILGLSINPESQSSNDNGLTDGDIEQLVAQRTQARKDKNWAEGDRLRDVLQEAGITLVDKPGGLTEWFR.

Cysteine 29 contacts Zn(2+). Positions 31–41 (ITVYDYCHLGH) match the 'HIGH' region motif. Zn(2+)-binding residues include cysteine 215, histidine 240, and glutamate 244. A 'KMSKS' region motif is present at residues 272–276 (KMSKS). Residue lysine 275 participates in ATP binding.

Belongs to the class-I aminoacyl-tRNA synthetase family. Monomer. The cofactor is Zn(2+).

It is found in the cytoplasm. It catalyses the reaction tRNA(Cys) + L-cysteine + ATP = L-cysteinyl-tRNA(Cys) + AMP + diphosphate. The sequence is that of Cysteine--tRNA ligase (cysS) from Synechocystis sp. (strain ATCC 27184 / PCC 6803 / Kazusa).